Reading from the N-terminus, the 290-residue chain is Arylamine N-acetyltransferase 2 (290 aa).

The active-site Acyl-thioester intermediate is the Cys68. Residues Thr103 and Gly104 each coordinate CoA. Ile106–His107 serves as a coordination point for substrate. Catalysis depends on residues His107 and Asp122. 3 residues coordinate CoA: Tyr208, Thr214, and Ser287.

The protein belongs to the arylamine N-acetyltransferase family.

It localises to the cytoplasm. The enzyme catalyses an arylamine + acetyl-CoA = an N-acetylarylamine + CoA. It catalyses the reaction an N-hydroxyarylamine + acetyl-CoA = an N-acetoxyarylamine + CoA. Its function is as follows. Catalyzes the N- or O-acetylation of various arylamine and heterocyclic amine substrates, and participates in the detoxification of a plethora of hydrazine and arylamine drugs. This is Arylamine N-acetyltransferase 2 (NAT2) from Macaca mulatta (Rhesus macaque).